The following is a 725-amino-acid chain: Ribonuclease R (725 aa).

The RNB domain occupies 236–559 (RKDLRDKLII…QLHRLIKQMV (324 aa)). The S1 motif domain maps to 611-689 (GKSLKAQIVS…NLGKVDVVLE (79 aa)).

The protein belongs to the RNR ribonuclease family. RNase R subfamily.

The protein resides in the cytoplasm. The catalysed reaction is Exonucleolytic cleavage in the 3'- to 5'-direction to yield nucleoside 5'-phosphates.. In terms of biological role, 3'-5' exoribonuclease that releases 5'-nucleoside monophosphates and is involved in maturation of structured RNAs. This is Ribonuclease R from Mycoplasmopsis pulmonis (strain UAB CTIP) (Mycoplasma pulmonis).